Here is a 472-residue protein sequence, read N- to C-terminus: 3-isopropylmalate dehydratase large subunit (472 aa).

Positions 347, 407, and 410 each coordinate [4Fe-4S] cluster.

It belongs to the aconitase/IPM isomerase family. LeuC type 1 subfamily. As to quaternary structure, heterodimer of LeuC and LeuD. [4Fe-4S] cluster is required as a cofactor.

It catalyses the reaction (2R,3S)-3-isopropylmalate = (2S)-2-isopropylmalate. Its pathway is amino-acid biosynthesis; L-leucine biosynthesis; L-leucine from 3-methyl-2-oxobutanoate: step 2/4. In terms of biological role, catalyzes the isomerization between 2-isopropylmalate and 3-isopropylmalate, via the formation of 2-isopropylmaleate. The protein is 3-isopropylmalate dehydratase large subunit of Bacillus licheniformis (strain ATCC 14580 / DSM 13 / JCM 2505 / CCUG 7422 / NBRC 12200 / NCIMB 9375 / NCTC 10341 / NRRL NRS-1264 / Gibson 46).